A 134-amino-acid polypeptide reads, in one-letter code: Large ribosomal subunit protein bL20 (134 aa).

Belongs to the bacterial ribosomal protein bL20 family.

In terms of biological role, binds directly to 23S ribosomal RNA and is necessary for the in vitro assembly process of the 50S ribosomal subunit. It is not involved in the protein synthesizing functions of that subunit. The chain is Large ribosomal subunit protein bL20 from Rhizobium leguminosarum bv. trifolii (strain WSM2304).